A 179-amino-acid polypeptide reads, in one-letter code: Bifunctional protein PyrR (179 aa).

A PRPP-binding motif is present at residues 100–112 (VILIDDVLFTGRT).

It belongs to the purine/pyrimidine phosphoribosyltransferase family. PyrR subfamily.

The enzyme catalyses UMP + diphosphate = 5-phospho-alpha-D-ribose 1-diphosphate + uracil. Functionally, regulates the transcription of the pyrimidine nucleotide (pyr) operon in response to exogenous pyrimidines. Its function is as follows. Also displays a weak uracil phosphoribosyltransferase activity which is not physiologically significant. This chain is Bifunctional protein PyrR, found in Mannheimia succiniciproducens (strain KCTC 0769BP / MBEL55E).